The following is a 252-amino-acid chain: Triosephosphate isomerase (252 aa).

A substrate-binding site is contributed by 10–12 (NWK). The Electrophile role is filled by histidine 96. The Proton acceptor role is filled by glutamate 168. Substrate contacts are provided by residues glycine 174, serine 213, and 234–235 (GG).

The protein belongs to the triosephosphate isomerase family. In terms of assembly, homodimer.

The protein resides in the cytoplasm. It catalyses the reaction D-glyceraldehyde 3-phosphate = dihydroxyacetone phosphate. It functions in the pathway carbohydrate biosynthesis; gluconeogenesis. Its pathway is carbohydrate degradation; glycolysis; D-glyceraldehyde 3-phosphate from glycerone phosphate: step 1/1. In terms of biological role, involved in the gluconeogenesis. Catalyzes stereospecifically the conversion of dihydroxyacetone phosphate (DHAP) to D-glyceraldehyde-3-phosphate (G3P). This Idiomarina loihiensis (strain ATCC BAA-735 / DSM 15497 / L2-TR) protein is Triosephosphate isomerase.